Reading from the N-terminus, the 363-residue chain is Protein-glutamate methylesterase/protein-glutamine glutaminase 1 (363 aa).

The region spanning 7 to 124 (KVLIVDDSAL…SRGMQEYARE (118 aa)) is the Response regulatory domain. Asp-58 is modified (4-aspartylphosphate). Residues 164-356 (FSSTEKIIVI…RRLFGWLESQ (193 aa)) enclose the CheB-type methylesterase domain. Catalysis depends on residues Ser-176, His-202, and Asp-298.

This sequence belongs to the CheB family. Post-translationally, phosphorylated by CheA. Phosphorylation of the N-terminal regulatory domain activates the methylesterase activity.

Its subcellular location is the cytoplasm. It carries out the reaction [protein]-L-glutamate 5-O-methyl ester + H2O = L-glutamyl-[protein] + methanol + H(+). The catalysed reaction is L-glutaminyl-[protein] + H2O = L-glutamyl-[protein] + NH4(+). Functionally, involved in chemotaxis. Part of a chemotaxis signal transduction system that modulates chemotaxis in response to various stimuli. Catalyzes the demethylation of specific methylglutamate residues introduced into the chemoreceptors (methyl-accepting chemotaxis proteins or MCP) by CheR. Also mediates the irreversible deamidation of specific glutamine residues to glutamic acid. The sequence is that of Protein-glutamate methylesterase/protein-glutamine glutaminase 1 from Geobacter metallireducens (strain ATCC 53774 / DSM 7210 / GS-15).